The chain runs to 212 residues: Imidazole glycerol phosphate synthase subunit HisH (212 aa).

The 212-residue stretch at 1 to 212 folds into the Glutamine amidotransferase type-1 domain; that stretch reads MLAILDYKAG…YAYCKEASRA (212 aa). The Nucleophile role is filled by C79. Residues H187 and E189 contribute to the active site.

In terms of assembly, heterodimer of HisH and HisF.

It localises to the cytoplasm. The enzyme catalyses 5-[(5-phospho-1-deoxy-D-ribulos-1-ylimino)methylamino]-1-(5-phospho-beta-D-ribosyl)imidazole-4-carboxamide + L-glutamine = D-erythro-1-(imidazol-4-yl)glycerol 3-phosphate + 5-amino-1-(5-phospho-beta-D-ribosyl)imidazole-4-carboxamide + L-glutamate + H(+). It carries out the reaction L-glutamine + H2O = L-glutamate + NH4(+). The protein operates within amino-acid biosynthesis; L-histidine biosynthesis; L-histidine from 5-phospho-alpha-D-ribose 1-diphosphate: step 5/9. Functionally, IGPS catalyzes the conversion of PRFAR and glutamine to IGP, AICAR and glutamate. The HisH subunit catalyzes the hydrolysis of glutamine to glutamate and ammonia as part of the synthesis of IGP and AICAR. The resulting ammonia molecule is channeled to the active site of HisF. This is Imidazole glycerol phosphate synthase subunit HisH from Nitratidesulfovibrio vulgaris (strain DSM 19637 / Miyazaki F) (Desulfovibrio vulgaris).